The chain runs to 426 residues: Tryptophan--tRNA ligase (426 aa).

A 'HIGH' region motif is present at residues 66-74 (PSGEMHLGN). Residues 314 to 318 (KMSSS) carry the 'KMSKS' region motif.

It belongs to the class-I aminoacyl-tRNA synthetase family.

The protein resides in the cytoplasm. It catalyses the reaction tRNA(Trp) + L-tryptophan + ATP = L-tryptophyl-tRNA(Trp) + AMP + diphosphate + H(+). This chain is Tryptophan--tRNA ligase, found in Thermoplasma acidophilum (strain ATCC 25905 / DSM 1728 / JCM 9062 / NBRC 15155 / AMRC-C165).